The chain runs to 552 residues: MKALFRACRIGKVMLRYRLDTLLDGTAAERWLRLAKPFVPRISAEIVEQSRGRRLRLALQELGPIFVKFGQILSTRRDLVPQDIGDELVMLQDRVEPFEGQTARIIIETALGKSVESAFAHFDTVPLASASISQVHAATLHDRREVVVKVLRPDIEHQISDDIALLKSLATLVEHTHPNADKIRPREIVAEIETTLAAELDLQREGANASVLRRFWEASDDIYVPEVIWSHTAERVLTLERMYGIPSDDIALLDASGIDRKALSSKGIRVFYTQVFRDNFFHADAHSGNIWVDSDPARKSNPRFIALDFGIMGQLSQKDQYYLAENFMAIFHKDYRRIAELHVEAGWIPQHVRIEELEAAARSVCEPYFTRPLSQISLAEVLMKLFHVARRYQLTLQPQLILLQKTLLNIEGVGRQLDPELDIWVVARPVLERILRARYSPRHALKELNKRLPEIMTHAPDTPRLIHTWLVQQVESRKQNDVYLQQIRALAMTLQGLQRRVVNAIVGSGLLVAAAVLYGLHPDGLYLGTIPVWSLISGCVGALALFSAWWRS.

The Protein kinase domain occupies 121 to 504 (HFDTVPLASA…QGLQRRVVNA (384 aa)). Residues 127–135 (LASASISQV) and Lys149 each bind ATP. The active-site Proton acceptor is the Asp284. 2 helical membrane-spanning segments follow: residues 501 to 521 (VVNA…YGLH) and 530 to 550 (IPVW…SAWW).

The protein belongs to the ABC1 family. UbiB subfamily.

The protein localises to the cell inner membrane. It participates in cofactor biosynthesis; ubiquinone biosynthesis [regulation]. Functionally, is probably a protein kinase regulator of UbiI activity which is involved in aerobic coenzyme Q (ubiquinone) biosynthesis. In Xylella fastidiosa (strain M12), this protein is Probable protein kinase UbiB.